Here is a 295-residue protein sequence, read N- to C-terminus: Pantothenate synthetase (295 aa).

30-37 is a binding site for ATP; the sequence is MGNLHDGH. Histidine 37 acts as the Proton donor in catalysis. Glutamine 61 is a binding site for (R)-pantoate. Position 61 (glutamine 61) interacts with beta-alanine. 149-152 is a binding site for ATP; it reads GEKD. (R)-pantoate is bound at residue glutamine 155. ATP is bound by residues valine 178 and 186–189; that span reads MSSR.

The protein belongs to the pantothenate synthetase family. Homodimer.

The protein resides in the cytoplasm. The enzyme catalyses (R)-pantoate + beta-alanine + ATP = (R)-pantothenate + AMP + diphosphate + H(+). The protein operates within cofactor biosynthesis; (R)-pantothenate biosynthesis; (R)-pantothenate from (R)-pantoate and beta-alanine: step 1/1. In terms of biological role, catalyzes the condensation of pantoate with beta-alanine in an ATP-dependent reaction via a pantoyl-adenylate intermediate. The polypeptide is Pantothenate synthetase (Photobacterium profundum (strain SS9)).